A 429-amino-acid chain; its full sequence is Tyrosine-protein kinase STYK1 (429 aa).

The chain crosses the membrane as a helical span at residues 30 to 50; it reads VIIVPALLVGGFLILLAIILW. The tract at residues 58 to 83 is disordered; the sequence is SQRQSPGPRGTASVPASRGRSQEAAG. Residues 119–390 enclose the Protein kinase domain; the sequence is LEVLEQIHSG…GQLLQRLEAA (272 aa). Residues 125–133 and K152 contribute to the ATP site; that span reads IHSGSCGTL. D256 serves as the catalytic Proton acceptor.

This sequence belongs to the protein kinase superfamily. Tyr protein kinase family. Highly expressed in colon and small intestine. Weakly or not expressed in spleen, skeletal muscle, liver, kidney, heart and brain. Expressed in transformed kidney cell lines (COS-1 and HEK293T).

Its subcellular location is the membrane. The enzyme catalyses L-tyrosyl-[protein] + ATP = O-phospho-L-tyrosyl-[protein] + ADP + H(+). In terms of biological role, probable tyrosine protein-kinase, which has strong transforming capabilities on a variety of cell lines including NIH 3T3 fibroblasts and on athymic nude mice. When overexpressed, it can also induce tumor cell invasion as well as metastasis in distant organs. May act by activating both MAP kinase and phosphatidylinositol 3'-kinases (PI3K) pathways. In Mus musculus (Mouse), this protein is Tyrosine-protein kinase STYK1 (Styk1).